The following is a 206-amino-acid chain: Small ribosomal subunit protein uS4A (206 aa).

The S4 RNA-binding domain occupies 96 to 156 (GRLDNVVYRM…EKAKKQSRIG (61 aa)).

The protein belongs to the universal ribosomal protein uS4 family. Part of the 30S ribosomal subunit. Contacts protein S5. The interaction surface between S4 and S5 is involved in control of translational fidelity.

In terms of biological role, one of the primary rRNA binding proteins, it binds directly to 16S rRNA where it nucleates assembly of the body of the 30S subunit. With S5 and S12 plays an important role in translational accuracy. This Psychromonas ingrahamii (strain DSM 17664 / CCUG 51855 / 37) protein is Small ribosomal subunit protein uS4A.